A 270-amino-acid chain; its full sequence is NFAT activation molecule 1 (270 aa).

The N-terminal stretch at 1 to 42 is a signal peptide; it reads MENQPVRWRALPGLPRPPGLPAAPWLLLGVLLLPGTLRLAGG. Over 43 to 163 the chain is Extracellular; sequence QSVTHTGLPI…YREPPQSPQK (121 aa). Positions 50–150 constitute an Ig-like V-type domain; it reads LPIMASLANT…RGSGTFILVR (101 aa). Residues Cys65 and Cys114 are joined by a disulfide bond. N-linked (GlcNAc...) asparagine glycosylation occurs at Asn107. Residues 164-184 form a helical membrane-spanning segment; the sequence is LLLFGFTGLLSVLSVVGTALL. Topologically, residues 185 to 270 are cytoplasmic; that stretch reads LWNKKRMRGP…GELNLVYENL (86 aa). Positions 190–219 are disordered; sequence RMRGPGKDPTRKCPDPRSASSPKQHPSESV. Positions 194 to 204 are enriched in basic and acidic residues; sequence PGKDPTRKCPD. Positions 207–219 are enriched in polar residues; sequence SASSPKQHPSESV. One can recognise an ITAM domain in the interval 209–237; sequence SSPKQHPSESVYTALQRRETEVYACIENE. Tyr220 and Tyr231 each carry phosphotyrosine. The segment at 234–262 is disordered; that stretch reads IENEDGSSPTAKQSPLSQERPHRFEDDGE. Residues 239 to 250 show a composition bias toward polar residues; it reads GSSPTAKQSPLS.

In terms of assembly, no direct interaction with the B-cell antigen receptor (BCR). Interacts with SYK; probably involved in BCR signaling. Interacts with ZAP70. In terms of processing, N-glycosylated. Highly expressed in neutrophils, primary monocytes, mast cells, monocytic cell lines and lymphocytes. Also expressed in spleen B and T-cells, and lung. Expressed at low level in non-immune tissue.

It is found in the cell membrane. Functionally, may function in immune system as a receptor which activates via the calcineurin/NFAT-signaling pathway the downstream cytokine gene promoters. Activates the transcription of IL-13 and TNF-alpha promoters. May be involved in the regulation of B-cell, but not T-cell, development. Overexpression activates downstream effectors without ligand binding or antibody cross-linking. In Homo sapiens (Human), this protein is NFAT activation molecule 1 (NFAM1).